The following is a 189-amino-acid chain: Photosystem I assembly protein Ycf4 (189 aa).

The next 2 membrane-spanning stretches (helical) occupy residues 25 to 45 (SVYF…LAGL) and 62 to 82 (LVFI…SLAG).

This sequence belongs to the Ycf4 family.

The protein resides in the cellular thylakoid membrane. Seems to be required for the assembly of the photosystem I complex. This chain is Photosystem I assembly protein Ycf4, found in Synechococcus sp. (strain JA-2-3B'a(2-13)) (Cyanobacteria bacterium Yellowstone B-Prime).